The sequence spans 525 residues: GMP synthase [glutamine-hydrolyzing] (525 aa).

A Glutamine amidotransferase type-1 domain is found at 9 to 207 (RILILDFGSQ…VLGICGCEAL (199 aa)). C86 acts as the Nucleophile in catalysis. Catalysis depends on residues H181 and E183. The GMPS ATP-PPase domain maps to 208-400 (WTSATIIEDA…LGLPYDMLYR (193 aa)). Position 235–241 (235–241 (SGGVDSS)) interacts with ATP.

Homodimer.

The enzyme catalyses XMP + L-glutamine + ATP + H2O = GMP + L-glutamate + AMP + diphosphate + 2 H(+). Its pathway is purine metabolism; GMP biosynthesis; GMP from XMP (L-Gln route): step 1/1. In terms of biological role, catalyzes the synthesis of GMP from XMP. In Yersinia pseudotuberculosis serotype IB (strain PB1/+), this protein is GMP synthase [glutamine-hydrolyzing].